Here is a 347-residue protein sequence, read N- to C-terminus: Quinolinate synthase (347 aa).

Positions 47 and 68 each coordinate iminosuccinate. Cys-113 serves as a coordination point for [4Fe-4S] cluster. Residues Tyr-139–Asn-141 and Ser-156 each bind iminosuccinate. Residue Cys-200 participates in [4Fe-4S] cluster binding. Iminosuccinate-binding positions include His-226–Glu-228 and Thr-243. Residue Cys-297 participates in [4Fe-4S] cluster binding.

This sequence belongs to the quinolinate synthase family. Type 1 subfamily. Requires [4Fe-4S] cluster as cofactor.

The protein localises to the cytoplasm. It catalyses the reaction iminosuccinate + dihydroxyacetone phosphate = quinolinate + phosphate + 2 H2O + H(+). It participates in cofactor biosynthesis; NAD(+) biosynthesis; quinolinate from iminoaspartate: step 1/1. Functionally, catalyzes the condensation of iminoaspartate with dihydroxyacetone phosphate to form quinolinate. This Salmonella enteritidis PT4 (strain P125109) protein is Quinolinate synthase.